Consider the following 316-residue polypeptide: Probable 5-dehydro-4-deoxyglucarate dehydratase (316 aa).

This sequence belongs to the DapA family.

It catalyses the reaction 5-dehydro-4-deoxy-D-glucarate + H(+) = 2,5-dioxopentanoate + CO2 + H2O. It participates in carbohydrate acid metabolism; D-glucarate degradation; 2,5-dioxopentanoate from D-glucarate: step 2/2. This Corynebacterium glutamicum (strain ATCC 13032 / DSM 20300 / JCM 1318 / BCRC 11384 / CCUG 27702 / LMG 3730 / NBRC 12168 / NCIMB 10025 / NRRL B-2784 / 534) protein is Probable 5-dehydro-4-deoxyglucarate dehydratase.